A 245-amino-acid chain; its full sequence is NADH-quinone oxidoreductase subunit C (245 aa).

The segment covering 1–10 (MNAPQDRTDD) has biased composition (basic and acidic residues). Disordered regions lie at residues 1–54 (MNAP…GYGG) and 217–245 (QRKD…RSYQ). Low complexity predominate over residues 11–28 (GGVPVPVTPAGATGGAPA). Gly residues predominate over residues 39–54 (GMFGDQGTGDVSGYGG).

The protein belongs to the complex I 30 kDa subunit family. In terms of assembly, NDH-1 is composed of 14 different subunits. Subunits NuoB, C, D, E, F, and G constitute the peripheral sector of the complex.

Its subcellular location is the cell membrane. The catalysed reaction is a quinone + NADH + 5 H(+)(in) = a quinol + NAD(+) + 4 H(+)(out). Functionally, NDH-1 shuttles electrons from NADH, via FMN and iron-sulfur (Fe-S) centers, to quinones in the respiratory chain. The immediate electron acceptor for the enzyme in this species is believed to be a menaquinone. Couples the redox reaction to proton translocation (for every two electrons transferred, four hydrogen ions are translocated across the cytoplasmic membrane), and thus conserves the redox energy in a proton gradient. In Salinispora arenicola (strain CNS-205), this protein is NADH-quinone oxidoreductase subunit C.